The chain runs to 240 residues: Aquaporin Z (240 aa).

A run of 2 helical transmembrane segments spans residues 10 to 30 and 35 to 55; these read AIGTFWLTFAGCGSAVIAAGF and IGLVGVSLAFGLSVVTMAYAI. An NPA 1 motif is present at residues 64–66; it reads NPA. Helical transmembrane passes span 82–102, 131–151, and 160–180; these read ILPYVIAQVCGAIVAAELLYI, MMACFLTEVVMTMMFLFIIMG, and GFAPLAIGLALVMIHLVSIPV. The NPA 2 motif lies at 186–188; the sequence is NPA. The helical transmembrane segment at 194–214 threads the bilayer; sequence ALFVGGWAMAQLWLFWVAPLI.

This sequence belongs to the MIP/aquaporin (TC 1.A.8) family. Homotetramer.

It localises to the cell inner membrane. It catalyses the reaction H2O(in) = H2O(out). Channel that permits osmotically driven movement of water in both directions. It is involved in the osmoregulation and in the maintenance of cell turgor during volume expansion in rapidly growing cells. It mediates rapid entry or exit of water in response to abrupt changes in osmolarity. The sequence is that of Aquaporin Z from Bradyrhizobium diazoefficiens (strain JCM 10833 / BCRC 13528 / IAM 13628 / NBRC 14792 / USDA 110).